The following is a 143-amino-acid chain: 3-hydroxyacyl-[acyl-carrier-protein] dehydratase FabZ (143 aa).

H49 is a catalytic residue.

Belongs to the thioester dehydratase family. FabZ subfamily.

It is found in the cytoplasm. The catalysed reaction is a (3R)-hydroxyacyl-[ACP] = a (2E)-enoyl-[ACP] + H2O. Its function is as follows. Involved in unsaturated fatty acids biosynthesis. Catalyzes the dehydration of short chain beta-hydroxyacyl-ACPs and long chain saturated and unsaturated beta-hydroxyacyl-ACPs. The sequence is that of 3-hydroxyacyl-[acyl-carrier-protein] dehydratase FabZ from Wolbachia pipientis subsp. Culex pipiens (strain wPip).